A 71-amino-acid polypeptide reads, in one-letter code: Long neurotoxin 1 (71 aa).

Cystine bridges form between cysteine 3-cysteine 20, cysteine 14-cysteine 41, cysteine 26-cysteine 30, cysteine 45-cysteine 56, and cysteine 57-cysteine 62.

Belongs to the three-finger toxin family. Long-chain subfamily. Type II alpha-neurotoxin sub-subfamily. As to expression, expressed by the venom gland.

Its subcellular location is the secreted. Its function is as follows. Binds with high affinity to muscular (alpha-1/CHRNA1) and neuronal (alpha-7/CHRNA7) nicotinic acetylcholine receptor (nAChR) and inhibits acetylcholine from binding to the receptor, thereby impairing neuromuscular and neuronal transmission. In Naja naja (Indian cobra), this protein is Long neurotoxin 1.